A 269-amino-acid chain; its full sequence is E3 ubiquitin-protein ligase complex slx8-rfp subunit slx8 (269 aa).

Residues 1-10 (MPPAHKRDTN) are compositionally biased toward basic and acidic residues. 2 disordered regions span residues 1–75 (MPPA…LNRA) and 166–196 (PRKQ…QVVP). A compositionally biased stretch (polar residues) spans 60 to 70 (PSGTTSENESL). The RING-type zinc finger occupies 206-247 (CVICLDSPENLSCTPCGHIFCNFCILSALGTTAATQKCPVCR).

As to quaternary structure, part of an E3 ubiquitin complex including rfp1, rfp2 and slx8. Interacts with rfp1 and rfp2.

The protein localises to the nucleus. The enzyme catalyses S-ubiquitinyl-[E2 ubiquitin-conjugating enzyme]-L-cysteine + [acceptor protein]-L-lysine = [E2 ubiquitin-conjugating enzyme]-L-cysteine + N(6)-ubiquitinyl-[acceptor protein]-L-lysine.. Its pathway is protein modification; protein ubiquitination. Mediates ubiquitination and subsequent desumoylation/degradation of sumoylated proteins and proteins containing SUMO-like domains. Acts as a critical suppressor of gross chromosomal rearrangements (GCRs) during normal cell cycle progression. Involved in stabilizing, restarting or resolving transiently stalled replication forks. Prevents accumulation of DNA damage during cell cycle progression. In Schizosaccharomyces pombe (strain 972 / ATCC 24843) (Fission yeast), this protein is E3 ubiquitin-protein ligase complex slx8-rfp subunit slx8 (slx8).